The primary structure comprises 598 residues: Elongation factor 4 (598 aa).

The 183-residue stretch at 4-186 folds into the tr-type G domain; that stretch reads SRLRNFSIIA…EIVKKIPPPK (183 aa). GTP is bound by residues 16 to 21 and 133 to 136; these read DHGKST and NKID.

Belongs to the TRAFAC class translation factor GTPase superfamily. Classic translation factor GTPase family. LepA subfamily.

Its subcellular location is the cell inner membrane. The enzyme catalyses GTP + H2O = GDP + phosphate + H(+). Required for accurate and efficient protein synthesis under certain stress conditions. May act as a fidelity factor of the translation reaction, by catalyzing a one-codon backward translocation of tRNAs on improperly translocated ribosomes. Back-translocation proceeds from a post-translocation (POST) complex to a pre-translocation (PRE) complex, thus giving elongation factor G a second chance to translocate the tRNAs correctly. Binds to ribosomes in a GTP-dependent manner. The sequence is that of Elongation factor 4 from Pelobacter propionicus (strain DSM 2379 / NBRC 103807 / OttBd1).